The sequence spans 107 residues: Large ribosomal subunit protein bL21 (107 aa).

Belongs to the bacterial ribosomal protein bL21 family. As to quaternary structure, part of the 50S ribosomal subunit. Contacts protein L20.

In terms of biological role, this protein binds to 23S rRNA in the presence of protein L20. The polypeptide is Large ribosomal subunit protein bL21 (Buchnera aphidicola subsp. Schizaphis graminum (strain Sg)).